A 400-amino-acid chain; its full sequence is NADH-quinone oxidoreductase subunit D (400 aa).

This sequence belongs to the complex I 49 kDa subunit family. In terms of assembly, NDH-1 is composed of 14 different subunits. Subunits NuoB, C, D, E, F, and G constitute the peripheral sector of the complex.

The protein resides in the cell inner membrane. It catalyses the reaction a quinone + NADH + 5 H(+)(in) = a quinol + NAD(+) + 4 H(+)(out). Functionally, NDH-1 shuttles electrons from NADH, via FMN and iron-sulfur (Fe-S) centers, to quinones in the respiratory chain. The immediate electron acceptor for the enzyme in this species is believed to be a menaquinone. Couples the redox reaction to proton translocation (for every two electrons transferred, four hydrogen ions are translocated across the cytoplasmic membrane), and thus conserves the redox energy in a proton gradient. This is NADH-quinone oxidoreductase subunit D from Chlorobium phaeovibrioides (strain DSM 265 / 1930) (Prosthecochloris vibrioformis (strain DSM 265)).